The chain runs to 996 residues: P3N-PIPO polyprotein (996 aa).

Residues 173–313 (VVRSASVNNL…VFFYDDVDHY (141 aa)) enclose the Peptidase S30 domain. Catalysis depends on for P1 proteinase activity residues His-226, Glu-235, and Ser-267. The Involved in interaction with stylet and aphid transmission motif lies at 365 to 368 (KLSC). An Involved in virions binding and aphid transmission motif is present at residues 621 to 623 (PTK). The region spanning 647–769 (MYIAKEGYCY…QSEMKHYRVG (123 aa)) is the Peptidase C6 domain. Active-site for helper component proteinase activity residues include Cys-655 and His-728.

This sequence belongs to the potyviridae P3N-PIPO polyprotein family. In terms of assembly, interacts (via PIPO domain) with host PCaP1 protein; this interaction may help to anchor the movement complex to the plasma membrane from which the complex could move to the plasmodesmata. Post-translationally, potyviral RNA is expressed as two polyproteins which undergo post-translational proteolytic processing. Genome polyprotein is processed by NIa-pro, P1 and HC-pro proteinases resulting in the production of at least ten individual proteins. P3N-PIPO is cleaved by P1 and HC-pro proteinases resulting in the production of three individual proteins. The P1 proteinase and the HC-pro cleave only their respective C-termini autocatalytically.

It localises to the host cell junction. Its subcellular location is the host plasmodesma. It catalyses the reaction Hydrolyzes a Gly-|-Gly bond at its own C-terminus, commonly in the sequence -Tyr-Xaa-Val-Gly-|-Gly, in the processing of the potyviral polyprotein.. In terms of biological role, required for aphid transmission and also has proteolytic activity. Only cleaves a Gly-Gly dipeptide at its own C-terminus. Interacts with virions and aphid stylets. Acts as a suppressor of RNA-mediated gene silencing, also known as post-transcriptional gene silencing (PTGS), a mechanism of plant viral defense that limits the accumulation of viral RNAs. May have RNA-binding activity. Functionally, allows efficient cell to cell propagation, by bypassing the host cell wall barrier. Transports viral genome to neighboring plant cells directly through plasmosdesmata, without any budding. This is P3N-PIPO polyprotein from Zucchini yellow mosaic virus (strain Reunion Island) (ZYMV).